The chain runs to 178 residues: Putative pre-16S rRNA nuclease (178 aa).

2 stretches are compositionally biased toward basic and acidic residues: residues 1–18 and 50–60; these read MDHA…DPGR and PRSKDRGPDAP. Disordered regions lie at residues 1–23 and 36–60; these read MDHA…RRIG and SDPD…PDAP.

It belongs to the YqgF nuclease family.

Its subcellular location is the cytoplasm. In terms of biological role, could be a nuclease involved in processing of the 5'-end of pre-16S rRNA. This is Putative pre-16S rRNA nuclease from Rhodococcus opacus (strain B4).